Here is a 249-residue protein sequence, read N- to C-terminus: ATP synthase subunit a (249 aa).

Transmembrane regions (helical) follow at residues 26–46 (FTNV…FLYL), 84–104 (FFPF…IGLF), 114–134 (IIVT…YGFF), 143–163 (LFVP…IEII), 185–205 (ITLK…ALGI), and 208–228 (TVLP…VAFL).

Belongs to the ATPase A chain family. F-type ATPases have 2 components, CF(1) - the catalytic core - and CF(0) - the membrane proton channel. CF(1) has five subunits: alpha(3), beta(3), gamma(1), delta(1), epsilon(1). CF(0) has three main subunits: a(1), b(2) and c(9-12). The alpha and beta chains form an alternating ring which encloses part of the gamma chain. CF(1) is attached to CF(0) by a central stalk formed by the gamma and epsilon chains, while a peripheral stalk is formed by the delta and b chains.

It localises to the cell inner membrane. In terms of biological role, key component of the proton channel; it plays a direct role in the translocation of protons across the membrane. This Brucella ovis (strain ATCC 25840 / 63/290 / NCTC 10512) protein is ATP synthase subunit a.